Consider the following 313-residue polypeptide: Probable F-box protein At3g44130 (313 aa).

An F-box domain is found at 1 to 46 (MASGNLPWELEEEILCRLPLGSLVRLRSVCKHWNDFFNDKWFIKKS).

This is Probable F-box protein At3g44130 from Arabidopsis thaliana (Mouse-ear cress).